Consider the following 181-residue polypeptide: Oligoribonuclease (181 aa).

The Exonuclease domain occupies 8–171; the sequence is LVWIDMEMTG…DDIRESIAEL (164 aa). Residue tyrosine 129 is part of the active site.

The protein belongs to the oligoribonuclease family.

Its subcellular location is the cytoplasm. Its function is as follows. 3'-to-5' exoribonuclease specific for small oligoribonucleotides. This Aeromonas hydrophila subsp. hydrophila (strain ATCC 7966 / DSM 30187 / BCRC 13018 / CCUG 14551 / JCM 1027 / KCTC 2358 / NCIMB 9240 / NCTC 8049) protein is Oligoribonuclease.